The primary structure comprises 276 residues: Rhomboid protease GlpG (276 aa).

The next 6 membrane-spanning stretches (helical) occupy residues 94–114, 142–162, 169–189, 192–212, 229–249, and 250–270; these read GPVT…MQIL, ALMH…WYLG, LGSG…GYVQ, FSGP…GYVW, LIIF…GMSM, and ANGA…VDSL. Ser201 (nucleophile) is an active-site residue. The active site involves His254.

This sequence belongs to the peptidase S54 family.

The protein localises to the cell inner membrane. The enzyme catalyses Cleaves type-1 transmembrane domains using a catalytic dyad composed of serine and histidine that are contributed by different transmembrane domains.. Its function is as follows. Rhomboid-type serine protease that catalyzes intramembrane proteolysis. This chain is Rhomboid protease GlpG, found in Escherichia coli (strain 55989 / EAEC).